We begin with the raw amino-acid sequence, 604 residues long: Threonine--tRNA ligase (604 aa).

Residues 197 to 499 are catalytic; it reads DHRKLGRELG…LIEEYAGDFP (303 aa). Cys296, His347, and His476 together coordinate Zn(2+).

The protein belongs to the class-II aminoacyl-tRNA synthetase family. Homodimer. It depends on Zn(2+) as a cofactor.

Its subcellular location is the cytoplasm. It carries out the reaction tRNA(Thr) + L-threonine + ATP = L-threonyl-tRNA(Thr) + AMP + diphosphate + H(+). In terms of biological role, catalyzes the attachment of threonine to tRNA(Thr) in a two-step reaction: L-threonine is first activated by ATP to form Thr-AMP and then transferred to the acceptor end of tRNA(Thr). Also edits incorrectly charged L-seryl-tRNA(Thr). The chain is Threonine--tRNA ligase from Synechococcus elongatus (strain ATCC 33912 / PCC 7942 / FACHB-805) (Anacystis nidulans R2).